Here is a 252-residue protein sequence, read N- to C-terminus: Cysteine-rich repeat secretory protein 38 (252 aa).

A signal peptide spans 1-27 (MSSLKRIVWFPILAIAIQILSIHTVLS). 2 Gnk2-homologous domains span residues 34–136 (FLFH…STNF) and 142–248 (FENR…IYPF).

It belongs to the cysteine-rich repeat secretory protein family.

Its subcellular location is the secreted. This is Cysteine-rich repeat secretory protein 38 (CRRSP38) from Arabidopsis thaliana (Mouse-ear cress).